Here is a 348-residue protein sequence, read N- to C-terminus: Mycothiol acetyltransferase (348 aa).

2 consecutive N-acetyltransferase domains span residues 12 to 156 and 169 to 330; these read TSMR…VDVT and VAVR…HGTP. Glutamate 44 provides a ligand contact to 1D-myo-inositol 2-(L-cysteinylamino)-2-deoxy-alpha-D-glucopyranoside. 91 to 93 contributes to the acetyl-CoA binding site; that stretch reads LVV. 1D-myo-inositol 2-(L-cysteinylamino)-2-deoxy-alpha-D-glucopyranoside contacts are provided by glutamate 196, lysine 235, and glutamate 253. Residues 257–259 and 264–270 each bind acetyl-CoA; these read VGV and QGLGMGR. Tyrosine 291 serves as a coordination point for 1D-myo-inositol 2-(L-cysteinylamino)-2-deoxy-alpha-D-glucopyranoside. 296-301 contributes to the acetyl-CoA binding site; that stretch reads NTVAVH. The interval 320–348 is disordered; it reads PPAGSPAHGTPLVRVTDTPSSPGDATMGS. The span at 336–348 shows a compositional bias: polar residues; sequence DTPSSPGDATMGS.

This sequence belongs to the acetyltransferase family. MshD subfamily. Monomer.

It catalyses the reaction 1D-myo-inositol 2-(L-cysteinylamino)-2-deoxy-alpha-D-glucopyranoside + acetyl-CoA = mycothiol + CoA + H(+). Its function is as follows. Catalyzes the transfer of acetyl from acetyl-CoA to desacetylmycothiol (Cys-GlcN-Ins) to form mycothiol. The chain is Mycothiol acetyltransferase from Cellulomonas flavigena (strain ATCC 482 / DSM 20109 / BCRC 11376 / JCM 18109 / NBRC 3775 / NCIMB 8073 / NRS 134).